Reading from the N-terminus, the 141-residue chain is Nucleoside diphosphate kinase (141 aa).

Residues K11, F59, R87, T93, R104, and N114 each contribute to the ATP site. Residue H117 is the Pros-phosphohistidine intermediate of the active site.

It belongs to the NDK family. Homotetramer. Mg(2+) serves as cofactor.

The protein resides in the cytoplasm. The catalysed reaction is a 2'-deoxyribonucleoside 5'-diphosphate + ATP = a 2'-deoxyribonucleoside 5'-triphosphate + ADP. It carries out the reaction a ribonucleoside 5'-diphosphate + ATP = a ribonucleoside 5'-triphosphate + ADP. In terms of biological role, major role in the synthesis of nucleoside triphosphates other than ATP. The ATP gamma phosphate is transferred to the NDP beta phosphate via a ping-pong mechanism, using a phosphorylated active-site intermediate. The sequence is that of Nucleoside diphosphate kinase from Xanthomonas axonopodis pv. citri (strain 306).